Consider the following 81-residue polypeptide: EC protein III (81 aa).

Belongs to the metallothionein superfamily. Type 15 family.

Functionally, binds 5 molecules of zinc. May have a role in Zn(2+) homeostasis during embryogenesis. The protein is EC protein III of Triticum aestivum (Wheat).